A 292-amino-acid chain; its full sequence is Nanos homolog 1 (292 aa).

Disordered regions lie at residues 1–41 (MEAF…QPFS) and 68–121 (GGNG…SRGR). Positions 40–56 (FSSWNDYLGLATLITKA) are essential for its translational repressor activity. The span at 76–87 (PPSSSSSSCCSP) shows a compositional bias: low complexity. The span at 104 to 115 (DYDEDDDDDSDE) shows a compositional bias: acidic residues. The segment at 213–267 (VCVFCRNNKEAMALYTTHILKGPDGRVLCPVLRRYTCPLCGASGDNAHTIKYCPL) adopts a Nanos-type zinc-finger fold. The Zn(2+) site is built by Cys-214, Cys-217, His-230, Cys-241, Cys-249, Cys-252, His-260, and Cys-265. 2 short sequence motifs (C2HC) span residues 214–241 (CVFCRNNKEAMALYTTHILKGPDGRVLC) and 249–265 (CPLCGASGDNAHTIKYC). Residues 268–292 (SKVPPPPARPPPRSARDGPPGKKLR) form a disordered region. Pro residues predominate over residues 269-280 (KVPPPPARPPPR). The segment covering 281-292 (SARDGPPGKKLR) has biased composition (basic and acidic residues).

The protein belongs to the nanos family. As to quaternary structure, interacts with PUM2, SNAPIN and CTNNB1. Interacts (via N-terminal region) with CTNND1. Interacts with DDX20 (via N-terminal region). In terms of tissue distribution, testis and ovary (at protein level). Predominantly expressed in testis. Specifically expressed during germline development. In adult tissues, it is mainly expressed in spermatogonia, the stem cells of the germline. Also expressed during meiosis in spermatocytes. Not present in late, post-meiotic stage germ cells. Expressed in fetal ovaries, while it is weakly or not expressed in mature postmeiotic oocytes, suggesting that it may be expressed in premeiotic female germ cells. Expressed at high levels only in the E-cadherin deficient cell lines. Highly expressed in lung carcinomas and mostly detected in invasive tumor cells and its expression correlates with tumor aggressiveness.

It localises to the cytoplasm. It is found in the perinuclear region. May act as a translational repressor which regulates translation of specific mRNAs by forming a complex with PUM2 that associates with the 3'-UTR of mRNA targets. Capable of interfering with the proadhesive and anti-invasive functions of E-cadherin. Up-regulates the production of MMP14 to promote tumor cell invasion. In Homo sapiens (Human), this protein is Nanos homolog 1 (NANOS1).